The primary structure comprises 248 residues: Triosephosphate isomerase (248 aa).

The substrate site is built by Asn-11 and Lys-13. The Electrophile role is filled by His-95. Glu-165 acts as the Proton acceptor in catalysis.

This sequence belongs to the triosephosphate isomerase family. As to quaternary structure, homodimer.

Its subcellular location is the cytoplasm. It carries out the reaction dihydroxyacetone phosphate = methylglyoxal + phosphate. The enzyme catalyses D-glyceraldehyde 3-phosphate = dihydroxyacetone phosphate. The protein operates within carbohydrate degradation; glycolysis; D-glyceraldehyde 3-phosphate from glycerone phosphate: step 1/1. Its pathway is carbohydrate biosynthesis; gluconeogenesis. Triosephosphate isomerase is an extremely efficient metabolic enzyme that catalyzes the interconversion between dihydroxyacetone phosphate (DHAP) and D-glyceraldehyde-3-phosphate (G3P) in glycolysis and gluconeogenesis. In terms of biological role, it is also responsible for the non-negligible production of methylglyoxal a reactive cytotoxic side-product that modifies and can alter proteins, DNA and lipids. The protein is Triosephosphate isomerase (TPI1) of Gallus gallus (Chicken).